A 227-amino-acid polypeptide reads, in one-letter code: Gamma-glutamyl-hercynylcysteine sulfoxide hydrolase (227 aa).

Cys2 functions as the Nucleophile in the catalytic mechanism. Residues Cys2–Leu227 enclose the Glutamine amidotransferase type-2 domain.

It catalyses the reaction gamma-L-glutamyl-hercynylcysteine S-oxide + H2O = S-(hercyn-2-yl)-L-cysteine S-oxide + L-glutamate. It functions in the pathway amino-acid biosynthesis; ergothioneine biosynthesis. Catalyzes the hydrolysis of the gamma-glutamyl amide bond of hercynyl-gamma-L-glutamyl-L-cysteine sulfoxide to produce hercynylcysteine sulfoxide, a step in the biosynthesis pathway of ergothioneine. In Mycolicibacterium smegmatis (strain ATCC 700084 / mc(2)155) (Mycobacterium smegmatis), this protein is Gamma-glutamyl-hercynylcysteine sulfoxide hydrolase.